Here is a 324-residue protein sequence, read N- to C-terminus: 26S proteasome non-ATPase regulatory subunit 7 (324 aa).

One can recognise an MPN domain in the interval 9-144 (VVVHPLVLLS…TEAYISVEEV (136 aa)). A Glycyl lysine isopeptide (Lys-Gly) (interchain with G-Cter in ubiquitin) cross-link involves residue Lys-180. 4 positions are modified to N6-acetyllysine: Lys-204, Lys-214, Lys-316, and Lys-317. The disordered stretch occupies residues 281–324 (ANRDAEKKEGQEKEESKKDRKEDKEKDKDKEKSDVKKEEKKEKK).

Belongs to the peptidase M67A family. Component of the 19S proteasome regulatory particle complex. The 26S proteasome consists of a 20S core particle (CP) and two 19S regulatory subunits (RP). The regulatory particle is made of a lid composed of 9 subunits including PSMD7, a base containing 6 ATPases and few additional components. Within the complex, PSMD7 interacts with subunit PSMD4 through their respective MPN domain. Interacts with TRIM5.

Its function is as follows. Component of the 26S proteasome, a multiprotein complex involved in the ATP-dependent degradation of ubiquitinated proteins. This complex plays a key role in the maintenance of protein homeostasis by removing misfolded or damaged proteins, which could impair cellular functions, and by removing proteins whose functions are no longer required. Therefore, the proteasome participates in numerous cellular processes, including cell cycle progression, apoptosis, or DNA damage repair. The protein is 26S proteasome non-ATPase regulatory subunit 7 (PSMD7) of Homo sapiens (Human).